We begin with the raw amino-acid sequence, 251 residues long: MNMEIRHLGRVDYLPTYEAMQAFTLERTAATPNSLWICEHPPVYTQGLAGKIEHVLNPGDIPVVQTNRGGQVTYHGPGQVVAYPLIDLKQAGYYVKEYVYRIEEAVIRTLSHFGVTGHRVPGAPGIYVRLDDPFSHARLRPSPQPSPKGRGSSTPVLLPPLPGEGGGGGGPDPDPFHSLGKIAALGIKVSRHCTYHGVALNVAMDLEPFSRINPCGYAGLKTVDLRTIGVSVTWQEAADVLGQKLSSYLAP.

The region spanning 29–251 (AATPNSLWIC…GQKLSSYLAP (223 aa)) is the BPL/LPL catalytic domain. 68 to 75 (RGGQVTYH) lines the substrate pocket. Positions 137 to 174 (ARLRPSPQPSPKGRGSSTPVLLPPLPGEGGGGGGPDPD) are disordered. Substrate contacts are provided by residues 184 to 186 (ALG) and 197 to 199 (GVA). C215 serves as the catalytic Acyl-thioester intermediate.

The protein belongs to the LipB family.

The protein localises to the cytoplasm. The catalysed reaction is octanoyl-[ACP] + L-lysyl-[protein] = N(6)-octanoyl-L-lysyl-[protein] + holo-[ACP] + H(+). Its pathway is protein modification; protein lipoylation via endogenous pathway; protein N(6)-(lipoyl)lysine from octanoyl-[acyl-carrier-protein]: step 1/2. Catalyzes the transfer of endogenously produced octanoic acid from octanoyl-acyl-carrier-protein onto the lipoyl domains of lipoate-dependent enzymes. Lipoyl-ACP can also act as a substrate although octanoyl-ACP is likely to be the physiological substrate. The chain is Octanoyltransferase from Polaromonas sp. (strain JS666 / ATCC BAA-500).